The primary structure comprises 260 residues: Global transcriptional regulator CodY (260 aa).

Positions 1–159 are GAF domain; the sequence is MPNLLEKTRK…SSTVVGIQLL (159 aa). Residues 207 to 226 constitute a DNA-binding region (H-T-H motif); it reads ASVIADRIGITRSVIVNALR.

It belongs to the CodY family.

Its subcellular location is the cytoplasm. Its function is as follows. DNA-binding global transcriptional regulator which is involved in the adaptive response to starvation and acts by directly or indirectly controlling the expression of numerous genes in response to nutrient availability. During rapid exponential growth, CodY is highly active and represses genes whose products allow adaptation to nutrient depletion. The chain is Global transcriptional regulator CodY from Streptococcus pyogenes serotype M4 (strain MGAS10750).